The primary structure comprises 172 residues: Translationally-controlled tumor protein (172 aa).

In terms of domain architecture, TCTP spans 1-172 (MIIYRDLISH…FKDGLEMEKC (172 aa)). Residue Ser-46 is modified to Phosphoserine; by PLK1. At Ser-53 the chain carries Phosphoserine. Ser-64 carries the post-translational modification Phosphoserine; by PLK1. Residues 70–172 (VDIVMNHHLQ…FKDGLEMEKC (103 aa)) form a required for reduction of TSC22D1 protein stability region.

Belongs to the TCTP family. Homodimer. Interacts with STEAP3. Interacts with TSC22D1; interaction results in the destabilization of TSC22D1 protein. Found in several healthy and tumoral cells including erythrocytes, hepatocytes, macrophages, platelets, keratinocytes, erythroleukemia cells, gliomas, melanomas, hepatoblastomas, and lymphomas. It cannot be detected in kidney and renal cell carcinoma (RCC). Expressed in placenta and prostate.

It is found in the cytoplasm. Functionally, involved in calcium binding and microtubule stabilization. Acts as a negative regulator of TSC22D1-mediated apoptosis, via interaction with and destabilization of TSC22D1 protein. The protein is Translationally-controlled tumor protein (TPT1) of Homo sapiens (Human).